The following is a 100-amino-acid chain: uncharacterized protein (100 aa).

Lys-98 participates in a covalent cross-link: Isoglutamyl lysine isopeptide (Lys-Gln) (interchain with Q-Cter in protein Pup).

This is an uncharacterized protein from Mycobacterium tuberculosis (strain CDC 1551 / Oshkosh).